The sequence spans 529 residues: Putative UPF0481 protein At3g02645 (529 aa).

Residues asparagine 365 and asparagine 403 are each glycosylated (N-linked (GlcNAc...) asparagine). The helical transmembrane segment at 498–518 (ILAFLAAVLLLMLVSLQLFSL) threads the bilayer.

Belongs to the UPF0481 family.

It is found in the membrane. This chain is Putative UPF0481 protein At3g02645, found in Arabidopsis thaliana (Mouse-ear cress).